The sequence spans 91 residues: Elongation factor 1-beta (91 aa).

Homodimer.

Its function is as follows. Promotes the exchange of GDP for GTP in EF-1-alpha/GDP, thus allowing the regeneration of EF-1-alpha/GTP that could then be used to form the ternary complex EF-1-alpha/GTP/AAtRNA. The chain is Elongation factor 1-beta (ef1b) from Saccharolobus solfataricus (strain ATCC 35092 / DSM 1617 / JCM 11322 / P2) (Sulfolobus solfataricus).